Here is a 442-residue protein sequence, read N- to C-terminus: UDP-N-acetylmuramoylalanine--D-glutamate ligase (442 aa).

An ATP-binding site is contributed by 113 to 119 (GSNGKTT).

Belongs to the MurCDEF family.

The protein localises to the cytoplasm. The catalysed reaction is UDP-N-acetyl-alpha-D-muramoyl-L-alanine + D-glutamate + ATP = UDP-N-acetyl-alpha-D-muramoyl-L-alanyl-D-glutamate + ADP + phosphate + H(+). It functions in the pathway cell wall biogenesis; peptidoglycan biosynthesis. Cell wall formation. Catalyzes the addition of glutamate to the nucleotide precursor UDP-N-acetylmuramoyl-L-alanine (UMA). This Coxiella burnetii (strain CbuK_Q154) (Coxiella burnetii (strain Q154)) protein is UDP-N-acetylmuramoylalanine--D-glutamate ligase.